We begin with the raw amino-acid sequence, 180 residues long: Protein SPO16 homolog (180 aa).

As to quaternary structure, homooligomer. Interacts with SHOC, SYCP1 and SYCE3.

The protein resides in the chromosome. Functionally, plays a key role in reinforcing the integrity of the central element of the synaptonemal complex (SC) thereby stabilizing SC, ensuring progression of meiotic prophase I in male and female germ cells. Promotes homologous recombination and crossing-over in meiotic prophase I via its association with SHOC1. Required for the localization of TEX11 and MSH4 to recombination intermediates. This chain is Protein SPO16 homolog, found in Homo sapiens (Human).